We begin with the raw amino-acid sequence, 341 residues long: Fe-S cluster assembly protein DRE2 (341 aa).

Residues 1 to 157 (MNTLLLLHPT…FKKLSSPPTL (157 aa)) are N-terminal SAM-like domain. The interval 151-171 (LSSPPTLTDSSEADEDEESQL) is disordered. The interval 157 to 204 (LTDSSEADEDEESQLNEKLKGSKLIYFDESSDDEIIDEDELLRDDDGA) is linker. The segment covering 161–170 (SEADEDEESQ) has biased composition (acidic residues). Positions 215, 227, 230, and 232 each coordinate [2Fe-2S] cluster. The interval 215-232 (CALPNGKRRKKACKDCTC) is fe-S binding site A. [4Fe-4S] cluster contacts are provided by cysteine 304, cysteine 307, cysteine 315, and cysteine 318. Short sequence motifs (cx2C motif) lie at residues 304–307 (CGSC) and 315–318 (CDGC). The interval 304-318 (CGSCALGDAFRCDGC) is fe-S binding site B.

The protein belongs to the anamorsin family. In terms of assembly, monomer. Interacts with TAH18. Interacts with MIA40. Requires [2Fe-2S] cluster as cofactor. The cofactor is [4Fe-4S] cluster.

It is found in the cytoplasm. Its subcellular location is the mitochondrion intermembrane space. Component of the cytosolic iron-sulfur (Fe-S) protein assembly (CIA) machinery required for the maturation of extramitochondrial Fe-S proteins. Part of an electron transfer chain functioning in an early step of cytosolic Fe-S biogenesis, facilitating the de novo assembly of a [4Fe-4S] cluster on the scaffold complex CFD1-NBP35. Electrons are transferred to DRE2 from NADPH via the FAD- and FMN-containing protein TAH18. TAH18-DRE2 are also required for the assembly of the diferric tyrosyl radical cofactor of ribonucleotide reductase (RNR), probably by providing electrons for reduction during radical cofactor maturation in the catalytic small subunit RNR2. The sequence is that of Fe-S cluster assembly protein DRE2 from Komagataella phaffii (strain GS115 / ATCC 20864) (Yeast).